A 334-amino-acid chain; its full sequence is WD repeat domain 54 (334 aa).

3 WD repeats span residues 162-206, 208-247, and 250-289; these read GHQT…TLLT, IAGF…LHIQ, and AHAR…ESGS.

In terms of assembly, homodimer and homotrimer; forms tight forms of dimers and trimers. Interacts with IZUMO1 and IZUMO1R/JUNO. In terms of processing, cross-linked to tightly form both dimers and trimers by TGM2. Cross-linking enhances the activation of EGF receptor-mediated signaling pathway. Cross-linking is inhibited by EGF. Ubiquitinated. EGF increases ubiquitination. As to expression, widely expressed in the ovary and testis (at protein level).

Its subcellular location is the vesicle. The protein resides in the cytoplasm. It is found in the cell membrane. Functionally, plays a role in the adhesion and fusion of the sperm-oocyte membrane through its interactions with IZUMO1 and IZUMO1R/JUNO. When cross-linked to form dimers and trimers, it has a regulatory effect on ERK signaling pathway activity in response to EGF stimulation. Colocalizes with the EGF receptor in WDR54-specific vesicle where it sustains the internalization and controls the degradation of the EGF receptor after EGF stimulation. The chain is WD repeat domain 54 (Wdr54) from Rattus norvegicus (Rat).